A 111-amino-acid polypeptide reads, in one-letter code: Aspartate 1-decarboxylase (111 aa).

Ser25 (schiff-base intermediate with substrate; via pyruvic acid) is an active-site residue. Residue Ser25 is modified to Pyruvic acid (Ser). Residue Thr57 coordinates substrate. The active-site Proton donor is the Tyr58. Gly73–Ala75 contacts substrate.

The protein belongs to the PanD family. Heterooctamer of four alpha and four beta subunits. Pyruvate is required as a cofactor. In terms of processing, is synthesized initially as an inactive proenzyme, which is activated by self-cleavage at a specific serine bond to produce a beta-subunit with a hydroxyl group at its C-terminus and an alpha-subunit with a pyruvoyl group at its N-terminus.

It localises to the cytoplasm. The enzyme catalyses L-aspartate + H(+) = beta-alanine + CO2. It functions in the pathway cofactor biosynthesis; (R)-pantothenate biosynthesis; beta-alanine from L-aspartate: step 1/1. Its function is as follows. Catalyzes the pyruvoyl-dependent decarboxylation of aspartate to produce beta-alanine. This is Aspartate 1-decarboxylase from Francisella tularensis subsp. tularensis (strain FSC 198).